The sequence spans 417 residues: CinA-like protein (417 aa).

The protein belongs to the CinA family.

The chain is CinA-like protein from Leptospira biflexa serovar Patoc (strain Patoc 1 / Ames).